A 334-amino-acid polypeptide reads, in one-letter code: Broad-range acid phosphatase DET1 (334 aa).

Catalysis depends on H32, which acts as the Tele-phosphohistidine intermediate. Substrate is bound by residues N38, 44 to 45 (NG), and R108. E126 serves as the catalytic Proton donor/acceptor. Residues 168 to 171 (LNNT) and 195 to 205 (RVKDEPRIREQ) each bind substrate. Position 248 is a phosphoserine (S248).

This sequence belongs to the phosphoglycerate mutase family.

The protein resides in the cytoplasm. Its subcellular location is the nucleus. Functionally, metal-independent, broad-range acid phosphatase. Involved, either directly or indirectly, in the bidirectional transport of sterols between the endoplasmic reticulum and the plasma membrane. The sequence is that of Broad-range acid phosphatase DET1 (DET1) from Saccharomyces cerevisiae (strain ATCC 204508 / S288c) (Baker's yeast).